The sequence spans 155 residues: Small ribosomal subunit protein uS7 (155 aa).

It belongs to the universal ribosomal protein uS7 family. Part of the 30S ribosomal subunit. Contacts proteins S9 and S11.

One of the primary rRNA binding proteins, it binds directly to 16S rRNA where it nucleates assembly of the head domain of the 30S subunit. Is located at the subunit interface close to the decoding center, probably blocks exit of the E-site tRNA. The polypeptide is Small ribosomal subunit protein uS7 (Halorhodospira halophila (strain DSM 244 / SL1) (Ectothiorhodospira halophila (strain DSM 244 / SL1))).